A 575-amino-acid chain; its full sequence is Isocitrate dehydrogenase kinase/phosphatase (575 aa).

ATP-binding positions include 315–321 (APGVKGM) and lysine 336. Aspartate 371 is an active-site residue.

It belongs to the AceK family.

Its subcellular location is the cytoplasm. It catalyses the reaction L-seryl-[isocitrate dehydrogenase] + ATP = O-phospho-L-seryl-[isocitrate dehydrogenase] + ADP + H(+). Functionally, bifunctional enzyme which can phosphorylate or dephosphorylate isocitrate dehydrogenase (IDH) on a specific serine residue. This is a regulatory mechanism which enables bacteria to bypass the Krebs cycle via the glyoxylate shunt in response to the source of carbon. When bacteria are grown on glucose, IDH is fully active and unphosphorylated, but when grown on acetate or ethanol, the activity of IDH declines drastically concomitant with its phosphorylation. In Yersinia pseudotuberculosis serotype I (strain IP32953), this protein is Isocitrate dehydrogenase kinase/phosphatase.